The primary structure comprises 242 residues: Invasion chromosome antigen R (242 aa).

It is found in the secreted. Functionally, may contribute to pathogenesis, although some of its characteristics suggest it is a fossil gene. The polypeptide is Invasion chromosome antigen R (Shigella flexneri serotype 5a (strain M90T)).